Reading from the N-terminus, the 462-residue chain is Histidine--tRNA ligase (462 aa).

It belongs to the class-II aminoacyl-tRNA synthetase family. Homodimer.

It is found in the cytoplasm. It catalyses the reaction tRNA(His) + L-histidine + ATP = L-histidyl-tRNA(His) + AMP + diphosphate + H(+). The chain is Histidine--tRNA ligase (hisS) from Nostoc sp. (strain PCC 7120 / SAG 25.82 / UTEX 2576).